A 2286-amino-acid polypeptide reads, in one-letter code: DNA polymerase epsilon catalytic subunit A (2286 aa).

The tract at residues 1-30 is disordered; sequence MSLRSGGRRRADPGADGEASRDDGATSSVS. The segment covering 9 to 24 has biased composition (basic and acidic residues); that stretch reads RRADPGADGEASRDDG. Phosphoserine occurs at positions 1184, 1297, 1317, and 1940. The segment at 1939 to 1969 is disordered; the sequence is DSQKAGGAEDEQENEDDEEERDGEEEEEAEE. Acidic residues predominate over residues 1946–1969; the sequence is AEDEQENEDDEEERDGEEEEEAEE. Zn(2+)-binding residues include cysteine 2158, cysteine 2161, cysteine 2187, and cysteine 2190. The CysA-type zinc finger occupies 2158 to 2190; sequence CRSCNFCRDLDLCKDSSFSEDGAVLPQWLCSNC. 4 residues coordinate [4Fe-4S] cluster: cysteine 2221, cysteine 2224, cysteine 2236, and cysteine 2238. Positions 2221 to 2238 match the CysB motif motif; sequence CLKCRGVKETSMPVYCSC.

Belongs to the DNA polymerase type-B family. In terms of assembly, component of the DNA polymerase epsilon complex consisting of four subunits: the catalytic subunit POLE and the accessory subunits POLE2, POLE3 and POLE4. Interacts with RAD17 and TOPBP1.

It is found in the nucleus. The catalysed reaction is DNA(n) + a 2'-deoxyribonucleoside 5'-triphosphate = DNA(n+1) + diphosphate. Catalytic component of the DNA polymerase epsilon complex. Participates in chromosomal DNA replication. Required during synthesis of the leading DNA strands at the replication fork, binds at/or near replication origins and moves along DNA with the replication fork. Has 3'-5' proofreading exonuclease activity that corrects errors arising during DNA replication. Involved in DNA synthesis during DNA repair. Along with DNA polymerase POLD1 and DNA polymerase POLK, has a role in excision repair (NER) synthesis following UV irradiation. The chain is DNA polymerase epsilon catalytic subunit A from Homo sapiens (Human).